We begin with the raw amino-acid sequence, 172 residues long: Cytidylate kinase (172 aa).

8–16 (GPPGSGKST) provides a ligand contact to ATP.

This sequence belongs to the cytidylate kinase family. Type 2 subfamily.

The protein resides in the cytoplasm. The catalysed reaction is CMP + ATP = CDP + ADP. The enzyme catalyses dCMP + ATP = dCDP + ADP. This is Cytidylate kinase from Ignicoccus hospitalis (strain KIN4/I / DSM 18386 / JCM 14125).